The chain runs to 238 residues: uncharacterized protein (238 aa).

3 consecutive transmembrane segments (helical) span residues 19 to 39 (IVIE…FQII), 79 to 99 (IILF…AEFI), and 141 to 161 (YVEI…LIKC).

The protein resides in the cell membrane. This is an uncharacterized protein from Methanocaldococcus jannaschii (strain ATCC 43067 / DSM 2661 / JAL-1 / JCM 10045 / NBRC 100440) (Methanococcus jannaschii).